The primary structure comprises 456 residues: Peripherin (456 aa).

The span at 1–14 shows a compositional bias: polar residues; the sequence is MSHSGLRSTSTSYR. Residues 1–55 are disordered; it reads MSHSGLRSTSTSYRRTLGSSPVPSSYSSSSRLSTSRHFGSPSPGPSSRSSSSAFR. The interval 1–90 is head; that stretch reads MSHSGLRSTS…FLTTRSNEKA (90 aa). The span at 16-55 shows a compositional bias: low complexity; that stretch reads TLGSSPVPSSYSSSSRLSTSRHFGSPSPGPSSRSSSSAFR. The region spanning 88 to 397 is the IF rod domain; that stretch reads EKAELQELND…KLLEGEESRI (310 aa). Residues 91–123 form a coil 1A region; sequence ELQELNDRFASFIEKVRYLEQQNAVLVTEINQA. Positions 124–134 are linker 1; that stretch reads RSKEPTRASDL. The interval 135-230 is coil 1B; the sequence is CQQELRELRK…KLHEEELNDV (96 aa). The segment at 231–252 is linker 2; it reads QVSVQAQPVHMEIEAAKQPDLT. The coil 2 stretch occupies residues 253–395; the sequence is SALRDIRSQY…YRKLLEGEES (143 aa). Residues 396–456 form a tail region; it reads RIAVPIHSLT…RKEQSSEGEK (61 aa). A disordered region spans residues 411 to 456; the sequence is SPAAPEIDPSTETHTRKTVAIKTIETRDGEQVVTESRKEQSSEGEK. Over residues 434-456 the composition is skewed to basic and acidic residues; the sequence is IETRDGEQVVTESRKEQSSEGEK.

This sequence belongs to the intermediate filament family. Forms homodimers (in vitro). Homopolymerizes into a filamentous network (in vitro).

It is found in the cytoplasm. It localises to the cytoskeleton. The protein localises to the cell projection. Its subcellular location is the axon. The protein resides in the perikaryon. Functionally, class-III neuronal intermediate filament protein. My form an independent structural network without the involvement of other neurofilaments or may cooperate with other neuronal intermediate filament proteins to form a filamentous network. This is Peripherin (prph) from Xenopus laevis (African clawed frog).